Reading from the N-terminus, the 407-residue chain is RING-H2 finger protein ATL43 (407 aa).

Positions 1–22 (MSSSSLILLFSTLSLFLNVSLA) are cleaved as a signal peptide. A helical membrane pass occupies residues 57–77 (GIAVVIAVLTAFFSLTFLLLL). An RING-type; atypical zinc finger spans residues 146 to 188 (CAVCLARFEPTEVLRLLPKCKHAFHVECVDTWLDAHSTCPLCR).

Belongs to the RING-type zinc finger family. ATL subfamily.

Its subcellular location is the membrane. It catalyses the reaction S-ubiquitinyl-[E2 ubiquitin-conjugating enzyme]-L-cysteine + [acceptor protein]-L-lysine = [E2 ubiquitin-conjugating enzyme]-L-cysteine + N(6)-ubiquitinyl-[acceptor protein]-L-lysine.. Its pathway is protein modification; protein ubiquitination. This is RING-H2 finger protein ATL43 (ATL43) from Arabidopsis thaliana (Mouse-ear cress).